The chain runs to 216 residues: Probable nicotinate-nucleotide adenylyltransferase (216 aa).

Belongs to the NadD family.

It carries out the reaction nicotinate beta-D-ribonucleotide + ATP + H(+) = deamido-NAD(+) + diphosphate. The protein operates within cofactor biosynthesis; NAD(+) biosynthesis; deamido-NAD(+) from nicotinate D-ribonucleotide: step 1/1. Functionally, catalyzes the reversible adenylation of nicotinate mononucleotide (NaMN) to nicotinic acid adenine dinucleotide (NaAD). This Klebsiella pneumoniae subsp. pneumoniae (strain ATCC 700721 / MGH 78578) protein is Probable nicotinate-nucleotide adenylyltransferase.